The following is a 484-amino-acid chain: Glycogen synthase (484 aa).

Residue K20 participates in ADP-alpha-D-glucose binding.

This sequence belongs to the glycosyltransferase 1 family. Bacterial/plant glycogen synthase subfamily.

The enzyme catalyses [(1-&gt;4)-alpha-D-glucosyl](n) + ADP-alpha-D-glucose = [(1-&gt;4)-alpha-D-glucosyl](n+1) + ADP + H(+). It functions in the pathway glycan biosynthesis; glycogen biosynthesis. Synthesizes alpha-1,4-glucan chains using ADP-glucose. This Vibrio atlanticus (strain LGP32) (Vibrio splendidus (strain Mel32)) protein is Glycogen synthase.